The following is a 62-amino-acid chain: Large ribosomal subunit protein bL28 (62 aa).

This sequence belongs to the bacterial ribosomal protein bL28 family.

In Streptococcus agalactiae serotype Ia (strain ATCC 27591 / A909 / CDC SS700), this protein is Large ribosomal subunit protein bL28.